The chain runs to 351 residues: Nicotinate-nucleotide--dimethylbenzimidazole phosphoribosyltransferase (351 aa).

Glu-317 (proton acceptor) is an active-site residue.

The protein belongs to the CobT family.

It catalyses the reaction 5,6-dimethylbenzimidazole + nicotinate beta-D-ribonucleotide = alpha-ribazole 5'-phosphate + nicotinate + H(+). It functions in the pathway nucleoside biosynthesis; alpha-ribazole biosynthesis; alpha-ribazole from 5,6-dimethylbenzimidazole: step 1/2. Functionally, catalyzes the synthesis of alpha-ribazole-5'-phosphate from nicotinate mononucleotide (NAMN) and 5,6-dimethylbenzimidazole (DMB). In Pseudomonas putida (strain W619), this protein is Nicotinate-nucleotide--dimethylbenzimidazole phosphoribosyltransferase.